An 82-amino-acid chain; its full sequence is uncharacterized protein (82 aa).

This is an uncharacterized protein from Saccharomyces cerevisiae (strain ATCC 204508 / S288c) (Baker's yeast).